Here is a 318-residue protein sequence, read N- to C-terminus: Myoblast determination protein 1 (318 aa).

Met-1 is covalently cross-linked (Peptide (Met-Gly) (interchain with G-Cter in ubiquitin)). Lys-104 carries the post-translational modification N6-methyllysine; by EHMT2. The region spanning 109–160 is the bHLH domain; the sequence is DRRKAATMRERRRLSKVNEAFETLKRCTSSNPNQRLPKVEILRNAIRYIEGL. Disordered stretches follow at residues 174 to 224 and 266 to 318; these read AAAA…RRRN and APAL…YQVL. Positions 197–207 are enriched in polar residues; that stretch reads SDASSPRSNCS. The segment covering 266–276 has biased composition (low complexity); sequence APALLLADAPP.

In terms of assembly, efficient DNA binding requires dimerization with another bHLH protein. Seems to form active heterodimers with ITF-2. Interacts with SUV39H1. Interacts with DDX5. Interacts with CHD2. Interacts with TSC22D3. Interacts with SETD3. Interacts with P-TEFB complex; promotes the transcriptional activity of MYOD1 through its CDK9-mediated phosphorylation. Interacts with CSRP3. Interacts with NUPR1. Phosphorylated by CDK9. This phosphorylation promotes its function in muscle differentiation. Post-translationally, acetylated by a complex containing EP300 and PCAF. The acetylation is essential to activate target genes. Conversely, its deacetylation by SIRT1 inhibits its function. In terms of processing, ubiquitinated on the N-terminus; which is required for proteasomal degradation. Methylation at Lys-104 by EHMT2/G9a inhibits myogenic activity.

It is found in the nucleus. Acts as a transcriptional activator that promotes transcription of muscle-specific target genes and plays a role in muscle differentiation. Together with MYF5 and MYOG, co-occupies muscle-specific gene promoter core region during myogenesis. Induces fibroblasts to differentiate into myoblasts. Interacts with and is inhibited by the twist protein. This interaction probably involves the basic domains of both proteins. The chain is Myoblast determination protein 1 (MYOD1) from Bos taurus (Bovine).